The primary structure comprises 141 residues: Decarboxylase CPUR_05434 (141 aa).

One can recognise an EthD domain in the interval 26 to 121; the sequence is EGMSEEAYRN…MHDHEMFADT (96 aa).

Belongs to the tpcK family.

The enzyme catalyses atrochrysone carboxylate + H(+) = atrochrysone + CO2. Decarboxylase; part of the ergochrome gene cluster responsible for the typical purple-black color of the ergot sclerotia. The ergochrome gene cluster produces several ergot pigments including the yellow ergochrome secalonic acid and its derivatives, as well as the red anthraquinones endocrocin and clavorubin. The pathway begins with the synthesis of atrochrysone thioester by the polyketide synthase (PKS) CPUR_05437. The atrochrysone carboxyl ACP thioesterase CPUR_05436 then breaks the thioester bond and releases the atrochrysone carboxylic acid from CPUR_05437. The decarboxylase CPUR_05434 then catalyzes the concerted decarboxylation-elimination required to convert atochrysone carboxylic acid into emodin anthrone, which is further oxidized to emodin by the anthrone oxygenase CPUR_05435. Emodin is further modified to yield monodictyphenone via several steps involving CPUR_05427, CPUR_05428, CPUR_05429 and CPUR_05430. The short chain dehydrogenase/reductase CPUR_05418 then catalyzes the C-5 ketoreduction to give the xanthone skeleton of the monomeric units. Ergochromes formation requires further dimerization steps of different xanthone units, probably catalyzed by the cytochrome P450 monooxygenase CPUR_05419. CPUR_05425, CPUR_05426 and CPUR_05431 are unique to Claviceps, thus it is likely that they are involved in further modification of xanthone units or in their dimerization. The yellow ergochromes and the red anthraquinone pigments endocrocin and clavorubin are products from the same PKS derived precursors and the latter are likely shunt products in the pathway of xanthone biosynthesis. It is proposed that atrochrysone carboxylic acid released from the PKS CPUR_05437 can also be converted to endocrocin anthrone which is further oxidized into endocrocin by CPUR_05435. Endocrocin could be then modified to clavorubin, possibly by CPUR_05423 and CPUR_05431. Clavorubin is the principal anthraquinone metabolite produced by the cluster with a much higher yield compared to endocrocin. This chain is Decarboxylase CPUR_05434, found in Claviceps purpurea (strain 20.1) (Ergot fungus).